A 448-amino-acid chain; its full sequence is Probable glycine dehydrogenase (decarboxylating) subunit 1 (448 aa).

Belongs to the GcvP family. N-terminal subunit subfamily. As to quaternary structure, the glycine cleavage system is composed of four proteins: P, T, L and H. In this organism, the P 'protein' is a heterodimer of two subunits.

It catalyses the reaction N(6)-[(R)-lipoyl]-L-lysyl-[glycine-cleavage complex H protein] + glycine + H(+) = N(6)-[(R)-S(8)-aminomethyldihydrolipoyl]-L-lysyl-[glycine-cleavage complex H protein] + CO2. Functionally, the glycine cleavage system catalyzes the degradation of glycine. The P protein binds the alpha-amino group of glycine through its pyridoxal phosphate cofactor; CO(2) is released and the remaining methylamine moiety is then transferred to the lipoamide cofactor of the H protein. This chain is Probable glycine dehydrogenase (decarboxylating) subunit 1, found in Listeria monocytogenes serovar 1/2a (strain ATCC BAA-679 / EGD-e).